We begin with the raw amino-acid sequence, 376 residues long: MASGRKAALDAALKKIEKDFGKGSIMRLGENVHTQVDVISTGSLKLDIALGVGGYPKGRIIEVFGPESSGKTTVALHAAAEVQKQGGTAAYIDAENSLDAKYAQALGVNVDDLLLSQPDTGEQGLEIADDLVNSGAIDLLVIDSVAALVPRAEIEGEMGDSHVGLQARLMSQALRKLAGTLNRTGTIAIFINQIREKIGIMFGNPETTPGGRALKFYSTVRLEVRRSAQIKDGTNIVGNNTKIKVVKNKVAPPFKVAEVDIMYGKGISQTGELIDLAVDKDIINKSGAWYAYQGEKIGQGRVNAISWLDSPEHKKEHDEIFTSVRDQYGIGEKKDSDEDPGDNKKSKDSASDPFDDPNYNPKSSDPGDDLSDDDIY.

ATP is bound at residue 65 to 72 (GPESSGKT). A disordered region spans residues 316–376 (EHDEIFTSVR…GDDLSDDDIY (61 aa)). Over residues 331-350 (GEKKDSDEDPGDNKKSKDSA) the composition is skewed to basic and acidic residues. The span at 366–376 (PGDDLSDDDIY) shows a compositional bias: acidic residues.

Belongs to the RecA family.

It is found in the cytoplasm. In terms of biological role, can catalyze the hydrolysis of ATP in the presence of single-stranded DNA, the ATP-dependent uptake of single-stranded DNA by duplex DNA, and the ATP-dependent hybridization of homologous single-stranded DNAs. It interacts with LexA causing its activation and leading to its autocatalytic cleavage. The chain is Protein RecA from Oenococcus oeni (strain ATCC BAA-331 / PSU-1).